We begin with the raw amino-acid sequence, 258 residues long: Enterotoxin type G (258 aa).

An N-terminal signal peptide occupies residues 1–25; it reads MKKLSTVIIILILEIVFHNMNYVNA. The cysteines at positions 116 and 133 are disulfide-linked.

Belongs to the staphylococcal/streptococcal toxin family.

Its subcellular location is the secreted. Staphylococcal enterotoxins cause the intoxication staphylococcal food poisoning syndrome. The illness is characterized by high fever, hypotension, diarrhea, shock, and in some cases death. In Staphylococcus aureus (strain N315), this protein is Enterotoxin type G (entG).